The primary structure comprises 301 residues: GTPase Era (301 aa).

Positions 8–174 constitute an Era-type G domain; the sequence is KSGFVALVGR…LKTLKDYLPE (167 aa). The segment at 16-23 is G1; sequence GRPNVGKS. 16–23 contributes to the GTP binding site; sequence GRPNVGKS. The segment at 42–46 is G2; that stretch reads QTTRN. Residues 63-66 are G3; that stretch reads DTPG. GTP is bound by residues 63–67 and 124–127; these read DTPGI and NKID. The G4 stretch occupies residues 124–127; the sequence is NKID. Residues 153–155 form a G5 region; that stretch reads ISA. Residues 197–282 form the KH type-2 domain; it reads IREQILRLTD…NLKLWVKVRR (86 aa).

It belongs to the TRAFAC class TrmE-Era-EngA-EngB-Septin-like GTPase superfamily. Era GTPase family. As to quaternary structure, monomer.

The protein resides in the cytoplasm. Its subcellular location is the cell membrane. In terms of biological role, an essential GTPase that binds both GDP and GTP, with rapid nucleotide exchange. Plays a role in 16S rRNA processing and 30S ribosomal subunit biogenesis and possibly also in cell cycle regulation and energy metabolism. This Lactobacillus delbrueckii subsp. bulgaricus (strain ATCC 11842 / DSM 20081 / BCRC 10696 / JCM 1002 / NBRC 13953 / NCIMB 11778 / NCTC 12712 / WDCM 00102 / Lb 14) protein is GTPase Era.